The sequence spans 366 residues: Histone-lysine N-methyltransferase SETD7 (366 aa).

MORN repeat units follow at residues 36 to 58 (FEGN…DGST), 59 to 81 (LEGY…DGGV), and 106 to 128 (FKGQ…DGGS). In terms of domain architecture, SET spans 214-336 (ERVYVADSLI…AEEELTVAYG (123 aa)). S-adenosyl-L-methionine is bound by residues 226–228 (AGE), asparagine 296, histidine 297, and glutamate 356.

The protein belongs to the class V-like SAM-binding methyltransferase superfamily. Histone-lysine methyltransferase family. SET7 subfamily. As to quaternary structure, interacts with IPF1/PDX-1.

It is found in the nucleus. It localises to the chromosome. The enzyme catalyses L-lysyl(4)-[histone H3] + S-adenosyl-L-methionine = N(6)-methyl-L-lysyl(4)-[histone H3] + S-adenosyl-L-homocysteine + H(+). It carries out the reaction L-lysyl-[protein] + S-adenosyl-L-methionine = N(6)-methyl-L-lysyl-[protein] + S-adenosyl-L-homocysteine + H(+). Functionally, histone methyltransferase that specifically monomethylates 'Lys-4' of histone H3. H3 'Lys-4' methylation represents a specific tag for epigenetic transcriptional activation. Plays a central role in the transcriptional activation of genes such as collagenase or insulin. Recruited by IPF1/PDX-1 to the insulin promoter, leading to activate transcription. Also has methyltransferase activity toward non-histone proteins such as CGAS, p53/TP53, TAF10, and possibly TAF7 by recognizing and binding the [KR]-[STA]-K in substrate proteins. Monomethylates 'Lys-189' of TAF10, leading to increase the affinity of TAF10 for RNA polymerase II. Monomethylates 'Lys-372' of p53/TP53, stabilizing p53/TP53 and increasing p53/TP53-mediated transcriptional activation. Monomethylates 'Lys-491' of CGAS, promoting interaction between SGF29 and CGAS. The polypeptide is Histone-lysine N-methyltransferase SETD7 (Setd7) (Mus musculus (Mouse)).